The following is a 1017-amino-acid chain: Fanconi-associated nuclease 1 (1017 aa).

Residues 1–10 (MMSEGKPPDK) are compositionally biased toward basic and acidic residues. A disordered region spans residues 1-23 (MMSEGKPPDKKRPRRSLSISKNK). The segment covering 11 to 23 (KRPRRSLSISKNK) has biased composition (basic residues). Positions 14-22 (RRSLSISKN) match the D-box motif. The UBZ4-type zinc-finger motif lies at 41-69 (KLACPVCSKMVPRYDLNRHLDEMCANNDF). 4 residues coordinate Zn(2+): cysteine 44, cysteine 47, histidine 59, and cysteine 64. Disordered regions lie at residues 95–121 (EDVT…KREV) and 170–189 (IDKD…STVV). Polar residues predominate over residues 179–189 (SSPQSSKSTVV). Serine 180 bears the Phosphoserine mark. A KEN box motif is present at residues 212–214 (KEN). Residues 671-696 (SRFVEILQRLHMYEEAVRELESLLSQ) are a coiled coil. Glutamate 834, aspartate 960, glutamate 975, and valine 976 together coordinate Mn(2+). The 113-residue stretch at 895 to 1007 (EESLRAWVAA…GAEVEVCHVV (113 aa)) folds into the VRR-NUC domain.

Belongs to the FAN1 family. As to quaternary structure, interacts with FANCD2 (when monoubiquitinated). Interacts with FANCI, MLH1, MLH3 and PMS2. Mn(2+) is required as a cofactor. Requires Mg(2+) as cofactor. In terms of processing, ubiquitinated and degraded during mitotic exit by the APC/C-Cdh1 complex.

The protein localises to the nucleus. The catalysed reaction is Hydrolytically removes 5'-nucleotides successively from the 3'-hydroxy termini of 3'-hydroxy-terminated oligonucleotides.. In terms of biological role, nuclease required for the repair of DNA interstrand cross-links (ICL) recruited at sites of DNA damage by monoubiquitinated FANCD2. Specifically involved in repair of ICL-induced DNA breaks by being required for efficient homologous recombination, probably in the resolution of homologous recombination intermediates. Not involved in DNA double-strand breaks resection. Acts as a 5'-3' exonuclease that anchors at a cut end of DNA and cleaves DNA successively at every third nucleotide, allowing to excise an ICL from one strand through flanking incisions. Probably keeps excising with 3'-flap annealing until it reaches and unhooks the ICL. Acts at sites that have a 5'-terminal phosphate anchor at a nick or a 1- or 2-nucleotide flap and is augmented by a 3' flap. Also has endonuclease activity toward 5'-flaps. This is Fanconi-associated nuclease 1 from Homo sapiens (Human).